Reading from the N-terminus, the 125-residue chain is Small ribosomal subunit protein bS6 (125 aa).

The segment at 96–125 (VTAPSPMMREEKAKSAPQPAEEAKETTLAT) is disordered. Basic and acidic residues predominate over residues 116 to 125 (EEAKETTLAT).

This sequence belongs to the bacterial ribosomal protein bS6 family.

Its function is as follows. Binds together with bS18 to 16S ribosomal RNA. This is Small ribosomal subunit protein bS6 from Nitrosospira multiformis (strain ATCC 25196 / NCIMB 11849 / C 71).